We begin with the raw amino-acid sequence, 452 residues long: Putative tripartite motif-containing protein 49B (452 aa).

Residues 15–56 form an RING-type zinc finger; sequence CPICMNYFIDPVTIDCGHSFCRPCFYLNWKDSPFLVQCSECT. A B box-type zinc finger spans residues 88 to 129; that stretch reads SEEQMCGTHRETKKMFCEVDRSLLCLLCSSSQEHRDHRHCPI. Residues Cys-93, His-96, Cys-115, and His-121 each contribute to the Zn(2+) site. Residues 269–452 form the B30.2/SPRY domain; sequence ELSAGPITGL…LRPIFCCIHF (184 aa).

This sequence belongs to the TRIM/RBCC family.

The protein is Putative tripartite motif-containing protein 49B (TRIM49B) of Homo sapiens (Human).